Consider the following 163-residue polypeptide: Ribosome maturation factor RimP (163 aa).

It belongs to the RimP family.

The protein resides in the cytoplasm. Required for maturation of 30S ribosomal subunits. In Streptococcus thermophilus (strain CNRZ 1066), this protein is Ribosome maturation factor RimP.